A 282-amino-acid chain; its full sequence is 40S small subunit processome assembly factor 1 (282 aa).

Disordered stretches follow at residues 27–98 (YDLG…SEVP) and 121–143 (FHSRSEKRKPKSEEDKPAKNKTK). The segment covering 48–59 (KRDSETVADRAA) has biased composition (basic and acidic residues). 2 positions are modified to phosphoserine: Ser67 and Ser75. Low complexity predominate over residues 89 to 98 (SAPAAPSEVP). A compositionally biased stretch (basic and acidic residues) spans 131 to 143 (KSEEDKPAKNKTK). An N6-acetyllysine modification is found at Lys173. Positions 208–226 (EKRTSMEEEKRAAQETDIF) are enriched in basic and acidic residues. Residues 208-254 (EKRTSMEEEKRAAQETDIFKRKKRKGRSQEDRRSKKLAPSILSSGRA) are disordered. Ser268 carries the post-translational modification Phosphoserine.

In terms of assembly, part of the small subunit (SSU) processome, composed of more than 70 proteins and the RNA chaperone small nucleolar RNA (snoRNA) U3.

The protein localises to the chromosome. The protein resides in the nucleus. It is found in the nucleolus. In terms of biological role, part of the small subunit (SSU) processome, first precursor of the small eukaryotic ribosomal subunit. During the assembly of the SSU processome in the nucleolus, many ribosome biogenesis factors, an RNA chaperone and ribosomal proteins associate with the nascent pre-rRNA and work in concert to generate RNA folding, modifications, rearrangements and cleavage as well as targeted degradation of pre-ribosomal RNA by the RNA exosome. Prevents helicase DHX37 to be recruited before post-A1 state. The chain is 40S small subunit processome assembly factor 1 from Rattus norvegicus (Rat).